We begin with the raw amino-acid sequence, 177 residues long: Outer membrane lipoprotein Blc (177 aa).

An N-terminal signal peptide occupies residues 1–18 (MRILPVVAAVTAAFLVVA). A lipid anchor (N-palmitoyl cysteine) is attached at Cys-19. A lipid anchor (S-diacylglycerol cysteine) is attached at Cys-19.

Belongs to the calycin superfamily. Lipocalin family. In terms of assembly, homodimer.

The protein resides in the cell outer membrane. In terms of biological role, involved in the storage or transport of lipids necessary for membrane maintenance under stressful conditions. Displays a binding preference for lysophospholipids. The protein is Outer membrane lipoprotein Blc of Citrobacter freundii.